We begin with the raw amino-acid sequence, 393 residues long: Autophagy-related protein 18c (393 aa).

WD repeat units follow at residues 27–65, 70–114, 199–239, and 244–283; these read KEEA…ETFR, DGGF…CISE, AHDS…RLQE, and VDRA…VGED.

Belongs to the WD repeat PROPPIN family. Component of the PI(3,5)P2 regulatory complex at least composed of ATG18, SAC/FIG4, FAB1 and VAC14. In terms of tissue distribution, expressed in roots, stems, flowers and leaves.

Its subcellular location is the preautophagosomal structure membrane. It is found in the vacuole membrane. Its function is as follows. The PI(3,5)P2 regulatory complex regulates both the synthesis and turnover of phosphatidylinositol 3,5-bisphosphate (PtdIns(3,5)P2). Required for autophagy. In Arabidopsis thaliana (Mouse-ear cress), this protein is Autophagy-related protein 18c (ATG18C).